Here is a 243-residue protein sequence, read N- to C-terminus: Dirigent protein 16 (243 aa).

The signal sequence occupies residues 1-24; that stretch reads MMIKQSPFLLLTTILFTVAVFVAA.

It belongs to the plant dirigent protein family. As to quaternary structure, homodimer.

It is found in the secreted. Its subcellular location is the extracellular space. The protein resides in the apoplast. Its function is as follows. Dirigent proteins impart stereoselectivity on the phenoxy radical-coupling reaction, yielding optically active lignans from two molecules of coniferyl alcohol in the biosynthesis of lignans, flavonolignans, and alkaloids and thus plays a central role in plant secondary metabolism. The chain is Dirigent protein 16 (DIR16) from Arabidopsis thaliana (Mouse-ear cress).